The following is a 150-amino-acid chain: 3-dehydroquinate dehydratase (150 aa).

Tyr-26 functions as the Proton acceptor in the catalytic mechanism. Substrate-binding residues include Asn-77, His-83, and Asp-90. His-103 serves as the catalytic Proton donor. Substrate contacts are provided by residues 104–105 (LS) and Arg-114.

The protein belongs to the type-II 3-dehydroquinase family. In terms of assembly, homododecamer.

It catalyses the reaction 3-dehydroquinate = 3-dehydroshikimate + H2O. The protein operates within metabolic intermediate biosynthesis; chorismate biosynthesis; chorismate from D-erythrose 4-phosphate and phosphoenolpyruvate: step 3/7. Its function is as follows. Catalyzes a trans-dehydration via an enolate intermediate. The protein is 3-dehydroquinate dehydratase of Pectobacterium atrosepticum (strain SCRI 1043 / ATCC BAA-672) (Erwinia carotovora subsp. atroseptica).